The chain runs to 391 residues: Uroporphyrinogen decarboxylase, chloroplastic (391 aa).

Residues 71–75 (RQAGR), phenylalanine 90, serine 120, aspartate 121, tyrosine 198, serine 253, and histidine 368 contribute to the substrate site.

Belongs to the uroporphyrinogen decarboxylase family. Homodimer.

The protein resides in the plastid. Its subcellular location is the chloroplast. It carries out the reaction uroporphyrinogen III + 4 H(+) = coproporphyrinogen III + 4 CO2. It functions in the pathway porphyrin-containing compound metabolism; protoporphyrin-IX biosynthesis; coproporphyrinogen-III from 5-aminolevulinate: step 4/4. Catalyzes the decarboxylation of four acetate groups of uroporphyrinogen-III to yield coproporphyrinogen-III. This is Uroporphyrinogen decarboxylase, chloroplastic (DCUP) from Nicotiana tabacum (Common tobacco).